The primary structure comprises 777 residues: 5-methyltetrahydropteroyltriglutamate--homocysteine methyltransferase (777 aa).

Residues 17-20 and K132 contribute to the 5-methyltetrahydropteroyltri-L-glutamate site; that span reads RELK. Residues 455–457 and E508 contribute to the L-homocysteine site; that span reads IGS. Residues 455–457 and E508 contribute to the L-methionine site; that span reads IGS. 5-methyltetrahydropteroyltri-L-glutamate-binding positions include 539-540 and W585; that span reads RC. D623 provides a ligand contact to L-homocysteine. D623 contributes to the L-methionine binding site. A 5-methyltetrahydropteroyltri-L-glutamate-binding site is contributed by E629. Residues H665, C667, and E689 each coordinate Zn(2+). The Proton donor role is filled by H718. C750 contacts Zn(2+).

This sequence belongs to the vitamin-B12 independent methionine synthase family. Zn(2+) serves as cofactor.

The enzyme catalyses 5-methyltetrahydropteroyltri-L-glutamate + L-homocysteine = tetrahydropteroyltri-L-glutamate + L-methionine. It functions in the pathway amino-acid biosynthesis; L-methionine biosynthesis via de novo pathway; L-methionine from L-homocysteine (MetE route): step 1/1. Functionally, catalyzes the transfer of a methyl group from 5-methyltetrahydrofolate to homocysteine resulting in methionine formation. The polypeptide is 5-methyltetrahydropteroyltriglutamate--homocysteine methyltransferase (Caulobacter vibrioides (strain ATCC 19089 / CIP 103742 / CB 15) (Caulobacter crescentus)).